The primary structure comprises 207 residues: ATP synthase subunit 5, mitochondrial (207 aa).

This sequence belongs to the ATPase delta chain family. F-type ATPases have 2 components, CF(1) - the catalytic core - and CF(0) - the membrane proton channel. CF(1) has five subunits: alpha(3), beta(3), gamma(1), delta(1), epsilon(1). CF(0) has three main subunits: a, b and c.

Its subcellular location is the mitochondrion. The protein localises to the mitochondrion inner membrane. Mitochondrial membrane ATP synthase (F(1)F(0) ATP synthase or Complex V) produces ATP from ADP in the presence of a proton gradient across the membrane which is generated by electron transport complexes of the respiratory chain. F-type ATPases consist of two structural domains, F(1) - containing the extramembraneous catalytic core and F(0) - containing the membrane proton channel, linked together by a central stalk and a peripheral stalk. During catalysis, ATP synthesis in the catalytic domain of F(1) is coupled via a rotary mechanism of the central stalk subunits to proton translocation. Part of the complex F(0) domain and the peripheric stalk, which acts as a stator to hold the catalytic alpha(3)beta(3) subcomplex and subunit a/ATP6 static relative to the rotary elements. The protein is ATP synthase subunit 5, mitochondrial (ATP5) of Eremothecium gossypii (strain ATCC 10895 / CBS 109.51 / FGSC 9923 / NRRL Y-1056) (Yeast).